The sequence spans 139 residues: MPPAKKGPATSARKGQKTRRREKKNVPHGAAHIKSTFNNTIVTITDPQGNVIAWASSGHVGFKGSRKSTPFAAQLAAENAARKAQDHGVRKVDVFVKGPGSGRETAIRSLQAAGLEVGAISDVTPQPHNGVRPPKRRRV.

Disordered regions lie at residues 1 to 33 and 118 to 139; these read MPPA…AAHI and GAIS…RRRV. Residues 14–23 show a composition bias toward basic residues; that stretch reads KGQKTRRREK.

This sequence belongs to the universal ribosomal protein uS11 family. As to quaternary structure, part of the 30S ribosomal subunit. Interacts with proteins S7 and S18. Binds to IF-3.

In terms of biological role, located on the platform of the 30S subunit, it bridges several disparate RNA helices of the 16S rRNA. Forms part of the Shine-Dalgarno cleft in the 70S ribosome. This Mycobacterium tuberculosis (strain ATCC 25177 / H37Ra) protein is Small ribosomal subunit protein uS11.